A 465-amino-acid chain; its full sequence is Flavin-containing monooxygenase FMO GS-OX-like 2 (465 aa).

Residue 18-23 (GAGAAG) participates in FAD binding. 217 to 222 (GSSASG) serves as a coordination point for NADP(+).

It belongs to the FMO family. It depends on FAD as a cofactor.

In terms of biological role, catalyzes the conversion of methylthioalkyl glucosinolates of any chain length into methylsulfinylalkyl glucosinolates. This chain is Flavin-containing monooxygenase FMO GS-OX-like 2, found in Arabidopsis thaliana (Mouse-ear cress).